The primary structure comprises 282 residues: UPF0294 protein VIBHAR_03217 (282 aa).

It belongs to the UPF0294 family.

Its subcellular location is the cytoplasm. This Vibrio campbellii (strain ATCC BAA-1116) protein is UPF0294 protein VIBHAR_03217.